We begin with the raw amino-acid sequence, 57 residues long: Small ribosomal subunit protein bS21 (57 aa).

Belongs to the bacterial ribosomal protein bS21 family.

The polypeptide is Small ribosomal subunit protein bS21 (Phytoplasma australiense).